A 202-amino-acid polypeptide reads, in one-letter code: dITP/XTP pyrophosphatase (202 aa).

11–16 (TNNANK) contributes to the substrate binding site. Asp73 acts as the Proton acceptor in catalysis. Position 73 (Asp73) interacts with Mg(2+). Substrate-binding positions include Ser74, 155–158 (FGYD), Lys178, and 183–184 (HR).

Belongs to the HAM1 NTPase family. In terms of assembly, homodimer. It depends on Mg(2+) as a cofactor.

It catalyses the reaction XTP + H2O = XMP + diphosphate + H(+). It carries out the reaction dITP + H2O = dIMP + diphosphate + H(+). The catalysed reaction is ITP + H2O = IMP + diphosphate + H(+). Functionally, pyrophosphatase that catalyzes the hydrolysis of nucleoside triphosphates to their monophosphate derivatives, with a high preference for the non-canonical purine nucleotides XTP (xanthosine triphosphate), dITP (deoxyinosine triphosphate) and ITP. Seems to function as a house-cleaning enzyme that removes non-canonical purine nucleotides from the nucleotide pool, thus preventing their incorporation into DNA/RNA and avoiding chromosomal lesions. The chain is dITP/XTP pyrophosphatase from Lactiplantibacillus plantarum (strain ATCC BAA-793 / NCIMB 8826 / WCFS1) (Lactobacillus plantarum).